The chain runs to 315 residues: Rab effector Noc2 (315 aa).

Residues 41-158 (QRRKQHLSPA…KRSGAWFYKG (118 aa)) enclose the RabBD domain. The FYVE-type zinc finger occupies 89–146 (GNGLSQCLLCGEVLGFLGSSSVFCKDCRKKVCTKCGIEASPGQKRPLWLCKICSEQRE). Zn(2+) is bound by residues Cys95, Cys98, Cys112, Cys115, Cys120, Cys123, Cys138, and Cys141. The tract at residues 170–315 (GRADDPHFRP…APAGPSSCLG (146 aa)) is disordered. Basic and acidic residues-rich tracts occupy residues 184 to 193 (PAEREPRSSE) and 221 to 240 (LEDRLPSTGVRDRKGDKPWK). Residues 262–275 (GCQSSLASGETGTG) show a composition bias toward polar residues. A compositionally biased stretch (low complexity) spans 298-315 (GRAPAADAAPAGPSSCLG).

In terms of assembly, recruited to dense-core vesicles through specific interaction with RAB27A in endocrine cells. Interacts with RAB3A, RAB3B, RAB3C and RAB3D. Interacts with ZYX. Moderate to high levels of expression in thyroid, ovary, stomach, heart, pancreas, skeletal muscle, kidney and liver. Also detected in epithelial cells.

The protein resides in the cytoplasm. It localises to the cytoplasmic vesicle. The protein localises to the secretory vesicle membrane. Its function is as follows. Rab GTPase effector involved in the late steps of regulated exocytosis, both in endocrine and exocrine cells. Acts as a potential RAB3B effector protein in epithelial cells. This chain is Rab effector Noc2 (RPH3AL), found in Homo sapiens (Human).